The sequence spans 713 residues: Phosphoribosylformylglycinamidine synthase subunit PurL (713 aa).

Residue histidine 32 is part of the active site. Tyrosine 35 contributes to the ATP binding site. A Mg(2+)-binding site is contributed by glutamate 76. Substrate-binding positions include 77–80 (SHNH) and arginine 99. Histidine 78 acts as the Proton acceptor in catalysis. Aspartate 100 provides a ligand contact to Mg(2+). Glutamine 224 lines the substrate pocket. Aspartate 252 is a Mg(2+) binding site. 296–298 (ESQ) lines the substrate pocket. ATP-binding residues include aspartate 471 and glycine 508. Residue asparagine 509 coordinates Mg(2+). Residue serine 511 coordinates substrate.

The protein belongs to the FGAMS family. In terms of assembly, monomer. Part of the FGAM synthase complex composed of 1 PurL, 1 PurQ and 2 PurS subunits.

It is found in the cytoplasm. The enzyme catalyses N(2)-formyl-N(1)-(5-phospho-beta-D-ribosyl)glycinamide + L-glutamine + ATP + H2O = 2-formamido-N(1)-(5-O-phospho-beta-D-ribosyl)acetamidine + L-glutamate + ADP + phosphate + H(+). It participates in purine metabolism; IMP biosynthesis via de novo pathway; 5-amino-1-(5-phospho-D-ribosyl)imidazole from N(2)-formyl-N(1)-(5-phospho-D-ribosyl)glycinamide: step 1/2. Part of the phosphoribosylformylglycinamidine synthase complex involved in the purines biosynthetic pathway. Catalyzes the ATP-dependent conversion of formylglycinamide ribonucleotide (FGAR) and glutamine to yield formylglycinamidine ribonucleotide (FGAM) and glutamate. The FGAM synthase complex is composed of three subunits. PurQ produces an ammonia molecule by converting glutamine to glutamate. PurL transfers the ammonia molecule to FGAR to form FGAM in an ATP-dependent manner. PurS interacts with PurQ and PurL and is thought to assist in the transfer of the ammonia molecule from PurQ to PurL. This Thermococcus kodakarensis (strain ATCC BAA-918 / JCM 12380 / KOD1) (Pyrococcus kodakaraensis (strain KOD1)) protein is Phosphoribosylformylglycinamidine synthase subunit PurL.